A 186-amino-acid chain; its full sequence is Chromosome-anchoring protein RacA (186 aa).

Positions 3–23 (TADAANELGVSTKTVQRWVKQ) form a DNA-binding region, H-T-H motif. Residues 90–170 (ERLEERLQRF…NRREKDTAVR (81 aa)) adopt a coiled-coil conformation. The interval 158–186 (ESMNRREKDTAVRREEKKPKSKLKSIFSF) is disordered. Over residues 160-175 (MNRREKDTAVRREEKK) the composition is skewed to basic and acidic residues.

The protein belongs to the RacA family.

It is found in the cytoplasm. In terms of biological role, required for the formation of axial filaments and for anchoring the origin regions at the cell poles in sporulating cells, thus ensuring proper chromosome segregation in the prespore. Binds in a dispersed manner throughout the chromosome but preferentially to sites clustered in the origin portion of the chromosome, causing condensation of the chromosome and its remodeling into an elongated, anchored structure. The protein is Chromosome-anchoring protein RacA of Bacillus licheniformis (strain ATCC 14580 / DSM 13 / JCM 2505 / CCUG 7422 / NBRC 12200 / NCIMB 9375 / NCTC 10341 / NRRL NRS-1264 / Gibson 46).